The following is a 327-amino-acid chain: Eukaryotic translation initiation factor 3 subunit I (327 aa).

5 WD repeats span residues 8–49 (GHER…GSYD), 51–89 (HNGA…CIYT), 188–227 (VHRY…KLKQ), 229–268 (KSER…GHFE), and 285–324 (GHFG…LGFT).

It belongs to the eIF-3 subunit I family. As to quaternary structure, component of the eukaryotic translation initiation factor 3 (eIF-3) complex.

The protein localises to the cytoplasm. In terms of biological role, component of the eukaryotic translation initiation factor 3 (eIF-3) complex, which is involved in protein synthesis of a specialized repertoire of mRNAs and, together with other initiation factors, stimulates binding of mRNA and methionyl-tRNAi to the 40S ribosome. The eIF-3 complex specifically targets and initiates translation of a subset of mRNAs involved in cell proliferation. This Caenorhabditis briggsae protein is Eukaryotic translation initiation factor 3 subunit I.